Here is a 143-residue protein sequence, read N- to C-terminus: Small ribosomal subunit protein uS12 (143 aa).

P62 bears the Hydroxyproline mark.

This sequence belongs to the universal ribosomal protein uS12 family.

In Dictyostelium discoideum (Social amoeba), this protein is Small ribosomal subunit protein uS12 (rps23).